The sequence spans 441 residues: GVGFKAGVKDYRLTYYTPEYKTKDTDILAAFRMTPQPGVPAEEAGAAVAAESSTGTWTTVWTDGLTSLDRYKGRCYDIEPVAGEENQYIAYVAYPLDLFEEGSVTNMLTSIVGDVFGFKALRALXXEDLRIPPAYSKTFLGPPHGIQVERDKLNKYGRPLLGCTIKPKLGLSAKNYGRAVYECLRGGLDFTKDDENVNSQPFMRWRDRFLFVAEALFKSQAETGEIKGHYLNATAGTCEEMMKRAVFARELGVPIVMHDYLTGGFTANTSLAFYCRDNGLLLHIHRAMHAVIDRQKDHGMHFRVLAKALRMSGGDHIHAGTVVGKLEGEREVTLGFVDLLRDDYIEKDRSRGIYFTQDWVSMPGVFPVASGGIHVWHMPALTEIFGDDSVLQFGGGTLGHPWGNAPGAVANRVALEACVQARNEGRDLAREGNEIIREASK.

At Lys5 the chain carries N6,N6,N6-trimethyllysine. Position 164 (Thr164) interacts with substrate. Residue Lys166 is the Proton acceptor of the active site. Lys168 is a binding site for substrate. Residues Lys192, Asp194, and Glu195 each coordinate Mg(2+). Lys192 carries the N6-carboxylysine modification. His285 acts as the Proton acceptor in catalysis. 3 residues coordinate substrate: Arg286, His318, and Ser370.

The protein belongs to the RuBisCO large chain family. Type I subfamily. In terms of assembly, heterohexadecamer of 8 large chains and 8 small chains; disulfide-linked. The disulfide link is formed within the large subunit homodimers. The cofactor is Mg(2+). Post-translationally, the disulfide bond which can form in the large chain dimeric partners within the hexadecamer appears to be associated with oxidative stress and protein turnover.

It localises to the plastid. The protein localises to the chloroplast. The enzyme catalyses 2 (2R)-3-phosphoglycerate + 2 H(+) = D-ribulose 1,5-bisphosphate + CO2 + H2O. The catalysed reaction is D-ribulose 1,5-bisphosphate + O2 = 2-phosphoglycolate + (2R)-3-phosphoglycerate + 2 H(+). Functionally, ruBisCO catalyzes two reactions: the carboxylation of D-ribulose 1,5-bisphosphate, the primary event in carbon dioxide fixation, as well as the oxidative fragmentation of the pentose substrate in the photorespiration process. Both reactions occur simultaneously and in competition at the same active site. This chain is Ribulose bisphosphate carboxylase large chain, found in Hemionitis engywookii (Fendler's false cloak fern).